Consider the following 304-residue polypeptide: Splicing factor U2af small subunit B (304 aa).

The C3H1-type 1 zinc finger occupies 12 to 40 (EKDRVNCPFYFKIGACRHGDRCSRLHNRP). The RRM domain occupies 44-146 (PTIVLANMYQ…RPIIVEYSPV (103 aa)). Residues 148–175 (DFREATCRQFEENSCNRGGYCNFMHVKQ) form a C3H1-type 2 zinc finger. Positions 184–207 (LYGGRSRRSHGRSRSPSPRHRRGN) are enriched in basic residues. The tract at residues 184 to 304 (LYGGRSRRSH…QWNREREEKP (121 aa)) is disordered. The segment covering 208 to 220 (RDRDDFRRERDGY) has biased composition (basic and acidic residues). The segment covering 221 to 258 (RGGGDGYRGGGGGGGGDGYRGGDSYRGGGGGGRRGGGS) has biased composition (gly residues). Residues 268–280 (RRRHGSPPRRARS) are compositionally biased toward basic residues. Residues 281-304 (PVRESSEERRAKIEQWNREREEKP) are compositionally biased toward basic and acidic residues.

Belongs to the splicing factor SR family.

The protein resides in the nucleus. In terms of biological role, necessary for the splicing of pre-mRNA. In Oryza sativa subsp. japonica (Rice), this protein is Splicing factor U2af small subunit B (U2AF35B).